The chain runs to 206 residues: MSAVRSKICGITRIEDALAAAEAGADAIGLVFYPKSPRAVTVLQARAIIAALPPFITTVGLFVNASRCELNETLDAVALDMLQFHGDETPDECDGYHRPYIKALRVKAGDDIAQVCRTYRNARGVLLDTYVEGVPGGTGETFDWALIPDDLDKPVILAGGLTSANVAQAIAQVRPYAVDVSGGVEKSKGIKDREKILAFMSAVHGT.

Belongs to the TrpF family.

It catalyses the reaction N-(5-phospho-beta-D-ribosyl)anthranilate = 1-(2-carboxyphenylamino)-1-deoxy-D-ribulose 5-phosphate. The protein operates within amino-acid biosynthesis; L-tryptophan biosynthesis; L-tryptophan from chorismate: step 3/5. This is N-(5'-phosphoribosyl)anthranilate isomerase from Pseudomonas savastanoi pv. phaseolicola (strain 1448A / Race 6) (Pseudomonas syringae pv. phaseolicola (strain 1448A / Race 6)).